The sequence spans 91 residues: ATP synthase epsilon chain (91 aa).

This sequence belongs to the ATPase epsilon chain family. In terms of assembly, F-type ATPases have 2 components, CF(1) - the catalytic core - and CF(0) - the membrane proton channel. CF(1) has five subunits: alpha(3), beta(3), gamma(1), delta(1), epsilon(1). CF(0) has three main subunits: a, b and c.

The protein localises to the cell membrane. In terms of biological role, produces ATP from ADP in the presence of a proton gradient across the membrane. This chain is ATP synthase epsilon chain (atpC), found in Micrococcus luteus (strain ATCC 4698 / DSM 20030 / JCM 1464 / CCM 169 / CCUG 5858 / IAM 1056 / NBRC 3333 / NCIMB 9278 / NCTC 2665 / VKM Ac-2230) (Micrococcus lysodeikticus).